The chain runs to 521 residues: D-aminoacyl-tRNA deacylase (521 aa).

Disordered stretches follow at residues 323–353 (AVGT…SEDS) and 499–521 (VFST…SSSS). Over residues 343-353 (VDAERTESEDS) the composition is skewed to basic and acidic residues. The segment covering 501-521 (STSSSSSSSSSSSSSSSSSSS) has biased composition (low complexity).

It belongs to the DtdA deacylase family. Monomer. Zn(2+) is required as a cofactor.

The enzyme catalyses a D-aminoacyl-tRNA + H2O = a tRNA + a D-alpha-amino acid + H(+). It catalyses the reaction glycyl-tRNA(Ala) + H2O = tRNA(Ala) + glycine + H(+). D-aminoacyl-tRNA deacylase with broad substrate specificity. By recycling D-aminoacyl-tRNA to D-amino acids and free tRNA molecules, this enzyme counteracts the toxicity associated with the formation of D-aminoacyl-tRNA entities in vivo. The protein is D-aminoacyl-tRNA deacylase of Haloquadratum walsbyi (strain DSM 16790 / HBSQ001).